The following is a 365-amino-acid chain: Peptide chain release factor 2 (365 aa).

Gln251 carries the N5-methylglutamine modification.

It belongs to the prokaryotic/mitochondrial release factor family. In terms of processing, methylated by PrmC. Methylation increases the termination efficiency of RF2.

It is found in the cytoplasm. Functionally, peptide chain release factor 2 directs the termination of translation in response to the peptide chain termination codons UGA and UAA. This is Peptide chain release factor 2 from Sulfurimonas denitrificans (strain ATCC 33889 / DSM 1251) (Thiomicrospira denitrificans (strain ATCC 33889 / DSM 1251)).